The primary structure comprises 96 residues: UPF0235 protein YPK_0828 (96 aa).

Belongs to the UPF0235 family.

The chain is UPF0235 protein YPK_0828 from Yersinia pseudotuberculosis serotype O:3 (strain YPIII).